Here is a 508-residue protein sequence, read N- to C-terminus: Metalloprotease TIKI1 (508 aa).

The signal sequence occupies residues 1–23 (MVIIWNIFLPAFLLVLAKASLRS). The Extracellular segment spans residues 24–485 (SRDSANCKLN…KYIKAAQSVS (462 aa)). 4 N-linked (GlcNAc...) asparagine glycosylation sites follow: asparagine 219, asparagine 228, asparagine 277, and asparagine 335. A helical membrane pass occupies residues 486 to 506 (FSLSIPSAFLLLAWCFQQVAV). At 507 to 508 (LQ) the chain is on the cytoplasmic side.

This sequence belongs to the TIKI family. Requires Mn(2+) as cofactor. The cofactor is Co(2+). Zygotically expressed in the Spemann-Mangold organizer, in particular in the head Spemann-Mangold organizer region responsible for anterior patterning.

Its subcellular location is the cell membrane. In terms of biological role, metalloprotease that acts as a negative regulator of the Wnt signaling pathway: expressed in the Spemann-Mangold organizer and is required for anterior-neural patterning in head formation in embryos. Acts by mediating the cleavage of the N-terminal residues of a subset of Wnt proteins. Following cleavage, Wnt proteins become oxidized and form large disulfide-bond oligomers, leading to their inactivation. Able to cleave wnt8. The protein is Metalloprotease TIKI1 (trabd2a) of Xenopus tropicalis (Western clawed frog).